The chain runs to 199 residues: uncharacterized protein (199 aa).

Residues 17-37 (AGAVTLGIGFFALASALWFLI) form a helical membrane-spanning segment.

It is found in the membrane. This is an uncharacterized protein from Homo sapiens (Human).